The following is a 448-amino-acid chain: Argininosuccinate synthase (448 aa).

Residues 17 to 25 and Ala-43 each bind ATP; that span reads AFSGGLDTS. Tyr-99 lines the L-citrulline pocket. 2 residues coordinate ATP: Gly-129 and Thr-131. L-aspartate contacts are provided by Thr-131, Asn-135, and Asp-136. Asn-135 contributes to the L-citrulline binding site. Asp-136 lines the ATP pocket. Residues Arg-139 and Ser-192 each contribute to the L-citrulline site. Asp-194 is an ATP binding site. Residues Thr-201, Glu-203, and Glu-280 each contribute to the L-citrulline site.

It belongs to the argininosuccinate synthase family. Type 2 subfamily. Homotetramer.

It is found in the cytoplasm. The catalysed reaction is L-citrulline + L-aspartate + ATP = 2-(N(omega)-L-arginino)succinate + AMP + diphosphate + H(+). It functions in the pathway amino-acid biosynthesis; L-arginine biosynthesis; L-arginine from L-ornithine and carbamoyl phosphate: step 2/3. This Pectobacterium atrosepticum (strain SCRI 1043 / ATCC BAA-672) (Erwinia carotovora subsp. atroseptica) protein is Argininosuccinate synthase.